Reading from the N-terminus, the 433-residue chain is Serine--tRNA ligase (433 aa).

235 to 237 (TSE) contacts L-serine. 266–268 (RSE) serves as a coordination point for ATP. Glu289 serves as a coordination point for L-serine. Residue 353 to 356 (EISS) coordinates ATP. Residue Ser388 coordinates L-serine.

This sequence belongs to the class-II aminoacyl-tRNA synthetase family. Type-1 seryl-tRNA synthetase subfamily. In terms of assembly, homodimer. The tRNA molecule binds across the dimer.

The protein localises to the cytoplasm. It carries out the reaction tRNA(Ser) + L-serine + ATP = L-seryl-tRNA(Ser) + AMP + diphosphate + H(+). The enzyme catalyses tRNA(Sec) + L-serine + ATP = L-seryl-tRNA(Sec) + AMP + diphosphate + H(+). It participates in aminoacyl-tRNA biosynthesis; selenocysteinyl-tRNA(Sec) biosynthesis; L-seryl-tRNA(Sec) from L-serine and tRNA(Sec): step 1/1. Functionally, catalyzes the attachment of serine to tRNA(Ser). Is also able to aminoacylate tRNA(Sec) with serine, to form the misacylated tRNA L-seryl-tRNA(Sec), which will be further converted into selenocysteinyl-tRNA(Sec). The chain is Serine--tRNA ligase from Burkholderia pseudomallei (strain 1106a).